The chain runs to 83 residues: Small ribosomal subunit protein bS16 (83 aa).

It belongs to the bacterial ribosomal protein bS16 family.

This Acidovorax ebreus (strain TPSY) (Diaphorobacter sp. (strain TPSY)) protein is Small ribosomal subunit protein bS16.